The following is a 194-amino-acid chain: Adenine phosphoribosyltransferase (194 aa).

This sequence belongs to the purine/pyrimidine phosphoribosyltransferase family. As to quaternary structure, homodimer.

It is found in the cytoplasm. The catalysed reaction is AMP + diphosphate = 5-phospho-alpha-D-ribose 1-diphosphate + adenine. The protein operates within purine metabolism; AMP biosynthesis via salvage pathway; AMP from adenine: step 1/1. Its function is as follows. Catalyzes a salvage reaction resulting in the formation of AMP, that is energically less costly than de novo synthesis. This is Adenine phosphoribosyltransferase from Albidiferax ferrireducens (strain ATCC BAA-621 / DSM 15236 / T118) (Rhodoferax ferrireducens).